A 279-amino-acid chain; its full sequence is 4-hydroxy-3-methylbut-2-enyl diphosphate reductase (279 aa).

Cys12 is a [4Fe-4S] cluster binding site. 2 residues coordinate (2E)-4-hydroxy-3-methylbut-2-enyl diphosphate: His41 and His74. Dimethylallyl diphosphate is bound by residues His41 and His74. Residues His41 and His74 each contribute to the isopentenyl diphosphate site. Residue Cys96 participates in [4Fe-4S] cluster binding. A (2E)-4-hydroxy-3-methylbut-2-enyl diphosphate-binding site is contributed by His124. A dimethylallyl diphosphate-binding site is contributed by His124. Residue His124 coordinates isopentenyl diphosphate. The Proton donor role is filled by Glu126. Residue Thr164 participates in (2E)-4-hydroxy-3-methylbut-2-enyl diphosphate binding. Position 192 (Cys192) interacts with [4Fe-4S] cluster. Positions 220, 221, 222, and 263 each coordinate (2E)-4-hydroxy-3-methylbut-2-enyl diphosphate. Dimethylallyl diphosphate-binding residues include Ser220, Ser221, Asn222, and Ser263. Isopentenyl diphosphate-binding residues include Ser220, Ser221, Asn222, and Ser263.

It belongs to the IspH family. The cofactor is [4Fe-4S] cluster.

The catalysed reaction is isopentenyl diphosphate + 2 oxidized [2Fe-2S]-[ferredoxin] + H2O = (2E)-4-hydroxy-3-methylbut-2-enyl diphosphate + 2 reduced [2Fe-2S]-[ferredoxin] + 2 H(+). It catalyses the reaction dimethylallyl diphosphate + 2 oxidized [2Fe-2S]-[ferredoxin] + H2O = (2E)-4-hydroxy-3-methylbut-2-enyl diphosphate + 2 reduced [2Fe-2S]-[ferredoxin] + 2 H(+). The protein operates within isoprenoid biosynthesis; dimethylallyl diphosphate biosynthesis; dimethylallyl diphosphate from (2E)-4-hydroxy-3-methylbutenyl diphosphate: step 1/1. It functions in the pathway isoprenoid biosynthesis; isopentenyl diphosphate biosynthesis via DXP pathway; isopentenyl diphosphate from 1-deoxy-D-xylulose 5-phosphate: step 6/6. In terms of biological role, catalyzes the conversion of 1-hydroxy-2-methyl-2-(E)-butenyl 4-diphosphate (HMBPP) into a mixture of isopentenyl diphosphate (IPP) and dimethylallyl diphosphate (DMAPP). Acts in the terminal step of the DOXP/MEP pathway for isoprenoid precursor biosynthesis. This chain is 4-hydroxy-3-methylbut-2-enyl diphosphate reductase, found in Clostridioides difficile (strain 630) (Peptoclostridium difficile).